The primary structure comprises 346 residues: Heparan sulfate glucosamine 3-O-sulfotransferase 5 (346 aa).

The Cytoplasmic segment spans residues 1–12 (MLFKQQVWLRQK). Residues 13 to 32 (LLVLGSLAVGSLLYLVARVG) traverse the membrane as a helical; Signal-anchor for type II membrane protein segment. At 33–346 (SLDRLQPICP…QITGRTLNWP (314 aa)) the chain is on the lumenal side. N75 carries N-linked (GlcNAc...) asparagine glycosylation. Residue 100-104 (KGGTR) coordinates 3'-phosphoadenylyl sulfate. Substrate contacts are provided by residues 122 to 128 (EIHFFDN) and 155 to 158 (KSPA). N173 is a glycosylation site (N-linked (GlcNAc...) asparagine). 3'-phosphoadenylyl sulfate contacts are provided by R183 and S191. N204 carries N-linked (GlcNAc...) asparagine glycosylation. Residue 226 to 227 (YK) coordinates substrate. N287 carries N-linked (GlcNAc...) asparagine glycosylation. Y293 provides a ligand contact to 3'-phosphoadenylyl sulfate. The cysteines at positions 294 and 304 are disulfide-linked. 309–313 (KGRIH) is a 3'-phosphoadenylyl sulfate binding site.

This sequence belongs to the sulfotransferase 1 family.

Its subcellular location is the golgi apparatus membrane. The enzyme catalyses alpha-D-glucosaminyl-[heparan sulfate](n) + 3'-phosphoadenylyl sulfate = 3-sulfo-alpha-D-glucosaminyl-[heparan sulfate](n) + adenosine 3',5'-bisphosphate + H(+). In terms of biological role, sulfotransferase that utilizes 3'-phospho-5'-adenylyl sulfate (PAPS) to catalyze the transfer of a sulfo group to position 3 of glucosamine residues in heparan. Catalyzes the rate limiting step in the biosynthesis of heparan sulfate (HSact). This modification is a crucial step in the biosynthesis of anticoagulant heparan sulfate as it completes the structure of the antithrombin pentasaccharide binding site. Also generates GlcUA-GlcNS or IdoUA-GlcNS and IdoUA2S-GlcNH2. The chain is Heparan sulfate glucosamine 3-O-sulfotransferase 5 (Hs3st5) from Mus musculus (Mouse).